The chain runs to 164 residues: Transcription elongation factor GreA (164 aa).

Residues 11–76 are a coiled coil; it reads EESYDRLKAE…LQELLNNAKV (66 aa).

Belongs to the GreA/GreB family.

Necessary for efficient RNA polymerase transcription elongation past template-encoded arresting sites. The arresting sites in DNA have the property of trapping a certain fraction of elongating RNA polymerases that pass through, resulting in locked ternary complexes. Cleavage of the nascent transcript by cleavage factors such as GreA or GreB allows the resumption of elongation from the new 3'terminus. GreA releases sequences of 2 to 3 nucleotides. This chain is Transcription elongation factor GreA, found in Mycolicibacterium vanbaalenii (strain DSM 7251 / JCM 13017 / BCRC 16820 / KCTC 9966 / NRRL B-24157 / PYR-1) (Mycobacterium vanbaalenii).